Consider the following 59-residue polypeptide: Small, acid-soluble spore protein H 1 (59 aa).

It belongs to the SspH family.

It is found in the spore core. This is Small, acid-soluble spore protein H 1 (sspH1) from Bacillus cereus (strain ATCC 14579 / DSM 31 / CCUG 7414 / JCM 2152 / NBRC 15305 / NCIMB 9373 / NCTC 2599 / NRRL B-3711).